The primary structure comprises 593 residues: Brain-enriched guanylate kinase-associated protein (593 aa).

Position 1 is an N-acetylmethionine (Met-1). Tyr-137 is modified (phosphotyrosine). Residues Ser-200, Ser-229, Ser-246, Ser-265, Ser-346, and Ser-373 each carry the phosphoserine modification. Arg-381 is modified (asymmetric dimethylarginine). Residues Ser-455, Ser-465, Ser-475, Ser-477, Ser-500, Ser-502, Ser-506, Ser-553, and Ser-563 each carry the phosphoserine modification. The disordered stretch occupies residues 499–593 (LSLSPGRSAD…KAQLYGTLLN (95 aa)).

As to quaternary structure, interacts with DLG4 and DLGAP1 and forms a ternary complex.

Its subcellular location is the cytoplasm. The protein localises to the membrane. Functionally, may sustain the structure of the postsynaptic density (PSD). This is Brain-enriched guanylate kinase-associated protein (BEGAIN) from Homo sapiens (Human).